Here is a 384-residue protein sequence, read N- to C-terminus: Guanine nucleotide-binding protein alpha-1 subunit (384 aa).

Residue G2 is the site of N-myristoyl glycine attachment. The S-palmitoyl cysteine moiety is linked to residue C5. A G-alpha domain is found at 38-384 (HIQKLLLLGA…RRNLFEAGLL (347 aa)). The segment at 41-54 (KLLLLGAGESGKST) is G1 motif. Positions 49, 50, 51, 52, 53, 54, 188, 189, 194, 222, 288, 289, 291, and 356 each coordinate GTP. S53 serves as a coordination point for Mg(2+). The segment at 186-194 (DVLYARVRT) is G2 motif. T194 contributes to the Mg(2+) binding site. Residues 215 to 224 (YRLFDVGGQR) are G3 motif. A G4 motif region spans residues 284–291 (MLFLNKFD). The interval 354-359 (TTALDQ) is G5 motif.

It belongs to the G-alpha family. In terms of assembly, g proteins are composed of 3 units; alpha, beta and gamma. The alpha chain contains the guanine nucleotide binding site. It depends on Mg(2+) as a cofactor.

Its function is as follows. Guanine nucleotide-binding proteins (G proteins) are involved as modulators or transducers in various transmembrane signaling systems. This Lupinus luteus (European yellow lupine) protein is Guanine nucleotide-binding protein alpha-1 subunit (GPA1).